Here is a 306-residue protein sequence, read N- to C-terminus: Agmatinase (306 aa).

Positions 126, 149, 151, 153, 230, and 232 each coordinate Mn(2+).

The protein belongs to the arginase family. Agmatinase subfamily. Requires Mn(2+) as cofactor.

It carries out the reaction agmatine + H2O = urea + putrescine. The protein operates within amine and polyamine biosynthesis; putrescine biosynthesis via agmatine pathway; putrescine from agmatine: step 1/1. Its function is as follows. Catalyzes the formation of putrescine from agmatine. This Shigella boydii serotype 18 (strain CDC 3083-94 / BS512) protein is Agmatinase.